Here is a 565-residue protein sequence, read N- to C-terminus: NAD-dependent malic enzyme (565 aa).

The active-site Proton donor is tyrosine 104. Arginine 157 provides a ligand contact to NAD(+). The Proton acceptor role is filled by lysine 175. A divalent metal cation-binding residues include glutamate 246, aspartate 247, and aspartate 270. Aspartate 270 and asparagine 418 together coordinate NAD(+).

The protein belongs to the malic enzymes family. Homotetramer. It depends on Mg(2+) as a cofactor. Mn(2+) serves as cofactor.

It catalyses the reaction (S)-malate + NAD(+) = pyruvate + CO2 + NADH. It carries out the reaction oxaloacetate + H(+) = pyruvate + CO2. The chain is NAD-dependent malic enzyme from Yersinia enterocolitica serotype O:8 / biotype 1B (strain NCTC 13174 / 8081).